The chain runs to 267 residues: L-erythrulose-1-phosphate isomerase (267 aa).

The active-site Electrophile is His95. Glu168 serves as the catalytic Proton acceptor. Residues Gly174 and Ser211 each coordinate substrate.

This sequence belongs to the triosephosphate isomerase family. In terms of assembly, homodimer.

It is found in the cytoplasm. It carries out the reaction L-erythrulose 1-phosphate = D-erythrulose 4-phosphate. It functions in the pathway carbohydrate metabolism; erythritol degradation. Its function is as follows. Catalyzes the isomerization of D-erythrulose-4P to L-erythrulose-1P. The polypeptide is L-erythrulose-1-phosphate isomerase (Rhizobium etli (strain ATCC 51251 / DSM 11541 / JCM 21823 / NBRC 15573 / CFN 42)).